The following is a 124-amino-acid chain: MPTFQQLVRSARKPHAKKTKSPALQGCPQRRGVCTRVYTTTPKKPNSALRKVARVRLSSKFEITAYIPGIGHNLQEHSVVLVRGGRVKDLPGVRYHIVRGSLDSIGVKNRNQSRSKYGVKRPKS.

Residues Met1 to Pro28 are disordered. The span at Ser10–Lys20 shows a compositional bias: basic residues.

It belongs to the universal ribosomal protein uS12 family. Part of the 30S ribosomal subunit.

The protein localises to the plastid. Its function is as follows. With S4 and S5 plays an important role in translational accuracy. Located at the interface of the 30S and 50S subunits. This chain is Small ribosomal subunit protein uS12c (rps12), found in Prototheca wickerhamii.